Consider the following 149-residue polypeptide: MKKRHQRLFLVLGVVAGVSVATALVLNAFRDNMTFFITPSEVMAKSDMPERHFRIGGLVEDGSVERDSDSTQVRFRVTDTEASVPVDFEGILPDLFREGQGVVVEGRITSNGVFKADNVMARHDEDYMPAEAQEALDRVEHSVDEVGDY.

Residues 1–7 (MKKRHQR) are Cytoplasmic-facing. A helical; Signal-anchor for type II membrane protein membrane pass occupies residues 8–28 (LFLVLGVVAGVSVATALVLNA). Over 29 to 149 (FRDNMTFFIT…EHSVDEVGDY (121 aa)) the chain is Periplasmic. Residues His-123 and Tyr-127 each coordinate heme.

This sequence belongs to the CcmE/CycJ family.

Its subcellular location is the cell inner membrane. Functionally, heme chaperone required for the biogenesis of c-type cytochromes. Transiently binds heme delivered by CcmC and transfers the heme to apo-cytochromes in a process facilitated by CcmF and CcmH. The polypeptide is Cytochrome c-type biogenesis protein CcmE (Halorhodospira halophila (strain DSM 244 / SL1) (Ectothiorhodospira halophila (strain DSM 244 / SL1))).